Consider the following 509-residue polypeptide: MEEFQRYIELDRSWQHNFFYPLIFQEYIYGFAYDHGLNKSILLENAGHKKYSLLIVKRLITRMYQQNHLILSANHSNQNDFFGHKHKKNLYYQIISEGFAVIVEIPFSLLLISSLGAKEKKIVKSHNLRSIHSIFPFFEDKFLHLNYVLKILIPYPIHLEILVQTLRYWVKDASSLHLLRFFLYEYRNWNSLITPQKYISIFSKKNQRLFLFLYNFHVCEYESIFVFLCNQSSHLRSTSFGALLERIYFYGKLEYLVKVKTFTKDFRLILWLFKDPFLHYVRYRGKSILASKGTSLLMYKWKYYLINFWQCHFSLWSQPRRIYINRLSKHSLDFMSFFSSVRLNSSVVRSQMVENSFLIDNPIKKFDTVVRIIPLVGSLAKAKFCNVLGHPVSKSAWTDLLDSDIIDRFGRICRNLSHYYSGSSRKKSLYRIKYILRLSCARTLARKHKSTVRAFLKRLGSEFLEEFFTEEEKVLSLILPRNFSISRGLYRGPLWYLDIICIHDLANDE.

This sequence belongs to the intron maturase 2 family. MatK subfamily.

Its subcellular location is the plastid. The protein localises to the chloroplast. Its function is as follows. Usually encoded in the trnK tRNA gene intron. Probably assists in splicing its own and other chloroplast group II introns. The sequence is that of Maturase K from Opuntia quimilo (Cactus).